We begin with the raw amino-acid sequence, 133 residues long: MSNHDPISDMLTRIRNASQKKHTTTTIPGSKMSLSIAKVLQKEGFISEINEEGEGYKSQIILGLKYSGKNKFPTIRSMQRVSKPGLRIYKNTRALPKVLGGLGVAIISTSKGVMSDRDARKQGIGGEVLCYVY.

Belongs to the universal ribosomal protein uS8 family. Part of the 30S ribosomal subunit. Contacts proteins S5 and S12.

In terms of biological role, one of the primary rRNA binding proteins, it binds directly to 16S rRNA central domain where it helps coordinate assembly of the platform of the 30S subunit. The polypeptide is Small ribosomal subunit protein uS8 (Prochlorococcus marinus (strain MIT 9215)).